Here is a 240-residue protein sequence, read N- to C-terminus: MLRYLFRRLVKALMWFMVGSVLLVLLLRFVPPPGTALMVERKIESWVDNDPIDLQRTWKPWDEISDNLKVAVIAGEDQKFPEHWGFDIDAIQAALIHNERGGSIRGASTLSQQVSKNLFLWSGRSYLRKGLEAWFTALIEVFWPKQRILEVYLNSVEWDEGVFGAEAAARHHFGVSAANLSRQQASLLAAVLPNPRVWSAARPSTYVMQRAGWVRRQMSQLGGADYLNRLNESRRAPWAE.

Residues 12-31 (ALMWFMVGSVLLVLLLRFVP) form a helical membrane-spanning segment.

It belongs to the glycosyltransferase 51 family.

The protein resides in the cell inner membrane. The enzyme catalyses [GlcNAc-(1-&gt;4)-Mur2Ac(oyl-L-Ala-gamma-D-Glu-L-Lys-D-Ala-D-Ala)](n)-di-trans,octa-cis-undecaprenyl diphosphate + beta-D-GlcNAc-(1-&gt;4)-Mur2Ac(oyl-L-Ala-gamma-D-Glu-L-Lys-D-Ala-D-Ala)-di-trans,octa-cis-undecaprenyl diphosphate = [GlcNAc-(1-&gt;4)-Mur2Ac(oyl-L-Ala-gamma-D-Glu-L-Lys-D-Ala-D-Ala)](n+1)-di-trans,octa-cis-undecaprenyl diphosphate + di-trans,octa-cis-undecaprenyl diphosphate + H(+). It functions in the pathway cell wall biogenesis; peptidoglycan biosynthesis. In terms of biological role, peptidoglycan polymerase that catalyzes glycan chain elongation from lipid-linked precursors. In Pseudomonas fluorescens (strain ATCC BAA-477 / NRRL B-23932 / Pf-5), this protein is Biosynthetic peptidoglycan transglycosylase.